The primary structure comprises 507 residues: ATP synthase subunit alpha (507 aa).

168–175 (GDRQTGKT) is an ATP binding site.

This sequence belongs to the ATPase alpha/beta chains family. F-type ATPases have 2 components, CF(1) - the catalytic core - and CF(0) - the membrane proton channel. CF(1) has five subunits: alpha(3), beta(3), gamma(1), delta(1), epsilon(1). CF(0) has three main subunits: a(1), b(2) and c(9-12). The alpha and beta chains form an alternating ring which encloses part of the gamma chain. CF(1) is attached to CF(0) by a central stalk formed by the gamma and epsilon chains, while a peripheral stalk is formed by the delta and b chains.

The protein resides in the cell membrane. It catalyses the reaction ATP + H2O + 4 H(+)(in) = ADP + phosphate + 5 H(+)(out). Functionally, produces ATP from ADP in the presence of a proton gradient across the membrane. The alpha chain is a regulatory subunit. This is ATP synthase subunit alpha from Mesomycoplasma hyopneumoniae (strain J / ATCC 25934 / NCTC 10110) (Mycoplasma hyopneumoniae).